A 159-amino-acid chain; its full sequence is Ribosomal RNA large subunit methyltransferase H (159 aa).

S-adenosyl-L-methionine contacts are provided by residues Leu76, Gly108, and 127-132 (LSKMTF).

This sequence belongs to the RNA methyltransferase RlmH family. In terms of assembly, homodimer.

It is found in the cytoplasm. The catalysed reaction is pseudouridine(1915) in 23S rRNA + S-adenosyl-L-methionine = N(3)-methylpseudouridine(1915) in 23S rRNA + S-adenosyl-L-homocysteine + H(+). In terms of biological role, specifically methylates the pseudouridine at position 1915 (m3Psi1915) in 23S rRNA. The sequence is that of Ribosomal RNA large subunit methyltransferase H from Ureaplasma urealyticum serovar 10 (strain ATCC 33699 / Western).